A 118-amino-acid polypeptide reads, in one-letter code: Non-specific lipid-transfer protein 3 (118 aa).

Positions 1-25 (MARAAATQLVLVAMVAAMLLVATDA) are cleaved as a signal peptide. 4 disulfide bridges follow: C29–C77, C39–C54, C55–C100, and C75–C114.

This sequence belongs to the plant LTP family.

Plant non-specific lipid-transfer proteins transfer phospholipids as well as galactolipids across membranes. May play a role in wax or cutin deposition in the cell walls of expanding epidermal cells and certain secretory tissues. This is Non-specific lipid-transfer protein 3 (LTP3) from Hordeum vulgare (Barley).